We begin with the raw amino-acid sequence, 543 residues long: Carboxypeptidase Y homolog A (543 aa).

The first 17 residues, Met1–Val17, serve as a signal peptide directing secretion. Residues Ala18–Lys128 constitute a propeptide that is removed on maturation. Disulfide bonds link Cys182–Cys421, Cys316–Cys330, Cys340–Cys363, Cys347–Cys356, and Cys385–Cys391. Asn213 is a glycosylation site (N-linked (GlcNAc...) asparagine). The active site involves Ser269. Asp460 is a catalytic residue. The N-linked (GlcNAc...) asparagine glycan is linked to Asn508. His519 is a catalytic residue.

It belongs to the peptidase S10 family.

The protein localises to the vacuole. The enzyme catalyses Release of a C-terminal amino acid with broad specificity.. Functionally, vacuolar carboxypeptidase involved in degradation of small peptides. Digests preferentially peptides containing an aliphatic or hydrophobic residue in P1' position, as well as methionine, leucine or phenylalanine in P1 position of ester substrate. The polypeptide is Carboxypeptidase Y homolog A (CPYA) (Phaeosphaeria nodorum (strain SN15 / ATCC MYA-4574 / FGSC 10173) (Glume blotch fungus)).